The primary structure comprises 114 residues: Iron-sulfur cluster insertion protein ErpA (114 aa).

3 residues coordinate iron-sulfur cluster: C42, C106, and C108.

The protein belongs to the HesB/IscA family. Homodimer. It depends on iron-sulfur cluster as a cofactor.

Required for insertion of 4Fe-4S clusters for at least IspG. The protein is Iron-sulfur cluster insertion protein ErpA of Pseudoalteromonas atlantica (strain T6c / ATCC BAA-1087).